Reading from the N-terminus, the 202-residue chain is LexA repressor (202 aa).

A DNA-binding region (H-T-H motif) is located at residues 28–48 (RAEIAQQLGFRSPNAAEEHLK). Active-site for autocatalytic cleavage activity residues include serine 119 and lysine 156.

It belongs to the peptidase S24 family. Homodimer.

The enzyme catalyses Hydrolysis of Ala-|-Gly bond in repressor LexA.. In terms of biological role, represses a number of genes involved in the response to DNA damage (SOS response), including recA and lexA. In the presence of single-stranded DNA, RecA interacts with LexA causing an autocatalytic cleavage which disrupts the DNA-binding part of LexA, leading to derepression of the SOS regulon and eventually DNA repair. The chain is LexA repressor from Pectobacterium atrosepticum (strain SCRI 1043 / ATCC BAA-672) (Erwinia carotovora subsp. atroseptica).